We begin with the raw amino-acid sequence, 353 residues long: Protein RecA (353 aa).

Residue 73 to 80 (GPESSGKT) participates in ATP binding.

It belongs to the RecA family.

The protein resides in the cytoplasm. In terms of biological role, can catalyze the hydrolysis of ATP in the presence of single-stranded DNA, the ATP-dependent uptake of single-stranded DNA by duplex DNA, and the ATP-dependent hybridization of homologous single-stranded DNAs. It interacts with LexA causing its activation and leading to its autocatalytic cleavage. The polypeptide is Protein RecA (Bordetella avium (strain 197N)).